The following is a 628-amino-acid chain: Glutamyl-tRNA(Gln) amidotransferase subunit E (628 aa).

The protein belongs to the GatB/GatE family. GatE subfamily. As to quaternary structure, heterodimer of GatD and GatE.

The enzyme catalyses L-glutamyl-tRNA(Gln) + L-glutamine + ATP + H2O = L-glutaminyl-tRNA(Gln) + L-glutamate + ADP + phosphate + H(+). Functionally, allows the formation of correctly charged Gln-tRNA(Gln) through the transamidation of misacylated Glu-tRNA(Gln) in organisms which lack glutaminyl-tRNA synthetase. The reaction takes place in the presence of glutamine and ATP through an activated gamma-phospho-Glu-tRNA(Gln). The GatDE system is specific for glutamate and does not act on aspartate. This Sulfurisphaera tokodaii (strain DSM 16993 / JCM 10545 / NBRC 100140 / 7) (Sulfolobus tokodaii) protein is Glutamyl-tRNA(Gln) amidotransferase subunit E.